The following is a 194-amino-acid chain: Imidazoleglycerol-phosphate dehydratase (194 aa).

The protein belongs to the imidazoleglycerol-phosphate dehydratase family.

Its subcellular location is the cytoplasm. The catalysed reaction is D-erythro-1-(imidazol-4-yl)glycerol 3-phosphate = 3-(imidazol-4-yl)-2-oxopropyl phosphate + H2O. The protein operates within amino-acid biosynthesis; L-histidine biosynthesis; L-histidine from 5-phospho-alpha-D-ribose 1-diphosphate: step 6/9. This is Imidazoleglycerol-phosphate dehydratase from Listeria innocua serovar 6a (strain ATCC BAA-680 / CLIP 11262).